Reading from the N-terminus, the 366-residue chain is Probable protein arginine N-methyltransferase 1.2 (366 aa).

Residues 45 to 347 (ADYYFDSYSH…NPRDVDIKLS (303 aa)) form the SAM-dependent MTase PRMT-type domain. Active-site residues include E157 and E166.

Belongs to the class I-like SAM-binding methyltransferase superfamily. Protein arginine N-methyltransferase family. Interacts with FIB2 and PRMT11.

The protein localises to the nucleus. It localises to the cytoplasm. Its function is as follows. Methylates (mono and asymmetric dimethylation) the guanidino nitrogens of arginyl residues present in a glycine and arginine-rich domain. Type I arginine methyltransferase active on both histones and non-histone proteins. Mediates the methylation of MED36A. In Arabidopsis thaliana (Mouse-ear cress), this protein is Probable protein arginine N-methyltransferase 1.2 (PRMT12).